The chain runs to 677 residues: UvrABC system protein B (677 aa).

Residues 31–417 (DRIESGETDI…SDGVVEQIIR (387 aa)) enclose the Helicase ATP-binding domain. 44–51 (GATGTGKS) is a binding site for ATP. A Beta-hairpin motif is present at residues 97 to 120 (YYDYYQPEAYVPKTDTFIEKDASV). The region spanning 434–596 (QIDDLLEEIR…VTPVPIKKTV (163 aa)) is the Helicase C-terminal domain. The region spanning 629 to 664 (KSHIKSLEAKMYMAAESLMFEEAAELRDEIQSLKEK) is the UVR domain.

It belongs to the UvrB family. In terms of assembly, forms a heterotetramer with UvrA during the search for lesions. Interacts with UvrC in an incision complex.

The protein localises to the cytoplasm. Functionally, the UvrABC repair system catalyzes the recognition and processing of DNA lesions. A damage recognition complex composed of 2 UvrA and 2 UvrB subunits scans DNA for abnormalities. Upon binding of the UvrA(2)B(2) complex to a putative damaged site, the DNA wraps around one UvrB monomer. DNA wrap is dependent on ATP binding by UvrB and probably causes local melting of the DNA helix, facilitating insertion of UvrB beta-hairpin between the DNA strands. Then UvrB probes one DNA strand for the presence of a lesion. If a lesion is found the UvrA subunits dissociate and the UvrB-DNA preincision complex is formed. This complex is subsequently bound by UvrC and the second UvrB is released. If no lesion is found, the DNA wraps around the other UvrB subunit that will check the other stand for damage. This Tropheryma whipplei (strain TW08/27) (Whipple's bacillus) protein is UvrABC system protein B.